A 1474-amino-acid polypeptide reads, in one-letter code: SH3 and multiple ankyrin repeat domains protein 2 (1474 aa).

Residues 66–76 show a composition bias toward polar residues; it reads LSPQLLQQTPS. The segment at 66–125 is disordered; sequence LSPQLLQQTPSKPDGATKSLGSYAPGPRSRSPSLNRLGGAGEDGKRPQPPHWHVGSPFTP. One can recognise an SH3 domain in the interval 148-207; it reads VPGRLFVAIKPYQPQVDGEIPLHRGDRVKVLSIGEGGFWEGSARGHIGWFPAECVEEVQC. Gln162 carries the post-translational modification Phosphoserine. The 95-residue stretch at 248–342 folds into the PDZ domain; sequence TVVLQKKDNE…HLVLKVVTVT (95 aa). Phosphoserine is present on Ser373. Residues 392 to 413 are disordered; it reads RKKKDKPEEIVPASKPSRTAEN. Residue Ser457 is modified to Phosphoserine. At Thr486 the chain carries Phosphothreonine. A disordered region spans residues 504–534; that stretch reads LSMPDTSEDIPPPPQSVPPSPPPPSPTTYNC. Residues 513 to 529 show a composition bias toward pro residues; sequence IPPPPQSVPPSPPPPSP. Ser586 carries the post-translational modification Phosphoserine. Disordered regions lie at residues 659–920, 947–995, and 1057–1153; these read TIIV…ADDK, PVAG…PAAA, and PALA…ESMD. Over residues 666–678 the composition is skewed to low complexity; the sequence is STSSSGKSSQGSS. The span at 711–722 shows a compositional bias: basic and acidic residues; sequence VRDREKRLEARR. Ser724 bears the Phosphoserine mark. Over residues 783–795 the composition is skewed to gly residues; the sequence is LGGGEAGAQGEAG. 2 stretches are compositionally biased toward low complexity: residues 811 to 823 and 833 to 846; these read PAAALKSSSPASP and RLLDPSSPLALALS. 2 stretches are compositionally biased toward basic and acidic residues: residues 847-868 and 899-920; these read ARDRAMQESQQGHKGEAPKADL and RRQETENKYETDLSKDRRADDK. Thr903 is modified (phosphothreonine). The segment covering 1075 to 1085 has biased composition (polar residues); it reads SLNSSQPANST. Over residues 1119 to 1130 the composition is skewed to basic and acidic residues; sequence VDSRSSSDHHLE. Low complexity predominate over residues 1131–1151; it reads TTSTISTVSSISTLSSEGGES. The SH3-binding signature appears at 1169–1175; sequence PPVPPKP. Disordered regions lie at residues 1195–1216 and 1260–1401; these read EDTDGFVIPPPAPPPPPGSAQA and NRGK…ISNK. Residues 1202-1212 are compositionally biased toward pro residues; sequence IPPPAPPPPPG. Low complexity predominate over residues 1291–1305; that stretch reads STVSGTRSTTVTFTV. A glycan (O-linked (GlcNAc) threonine) is linked at Thr1292. Residues 1307–1317 show a composition bias toward polar residues; that stretch reads PGTSQPITLQS. Residues Ser1334 and Ser1338 each carry the phosphoserine modification. 2 stretches are compositionally biased toward low complexity: residues 1352-1363 and 1385-1399; these read SAAAASPSPTLS and RSRSPSPSILQQPIS. The SAM domain occupies 1411–1474; sequence WTKPDVADWL…ERALKQLLDR (64 aa).

It belongs to the SHANK family. In terms of assembly, is part of a complex with DLG4/PSD-95 and DLGAP1/GKAP. Interacts with CTTN/cortactin SH3 domain, DLGAP1/GKAP and alpha-latrotoxin receptor 1. Interacts with DNM2, DBNL, GRID2, BAIAP2, SLC9A3, PLCB3 and CFTR. Interacts with ABI1 (via SH3 domain). Interacts (via proline-rich region) with PDE4D isoform 5 (via N-terminal region). Interacts with PDE4D isoform 33, isoform 4, isoform 7, isoform 8 and isoform 9 but not isoform 32 and isoform 6. Interacts weakly with PDE4D isoform 31. Interacts with ABI1. Expressed in epithelial cells (at protein level). All isoforms except isoform 7 are expressed predominantly in brain, with highest levels in olfactory bulb, cerebral cortex, cerebellum, central gray matter and hippocampus. Moderate levels of expression are seen in the caudate putamen, thalamic nuclei and brain stem. In cerebellum primarily expressed in Purkinje cells. Isoform 7 is not expressed in brain but expressed in liver, cholangiocytes and thymus. Isoform 7 is present in pancreas, colonic mucosa and thymocytes (at protein level).

It is found in the apical cell membrane. The protein localises to the cytoplasm. The protein resides in the synapse. It localises to the postsynaptic density. Its subcellular location is the cell projection. It is found in the growth cone. The protein localises to the dendritic spine. Seems to be an adapter protein in the postsynaptic density (PSD) of excitatory synapses that interconnects receptors of the postsynaptic membrane including NMDA-type and metabotropic glutamate receptors, and the actin-based cytoskeleton. May play a role in the structural and functional organization of the dendritic spine and synaptic junction. The polypeptide is SH3 and multiple ankyrin repeat domains protein 2 (Shank2) (Rattus norvegicus (Rat)).